A 511-amino-acid polypeptide reads, in one-letter code: 2,3-bisphosphoglycerate-independent phosphoglycerate mutase (511 aa).

Aspartate 12 provides a ligand contact to Mn(2+). A Phosphotyrosine modification is found at tyrosine 36. Serine 62 provides a ligand contact to Mn(2+). Serine 62 functions as the Phosphoserine intermediate in the catalytic mechanism. Substrate contacts are provided by residues histidine 123, 153–154 (RD), arginine 185, arginine 191, 261–264 (RPDR), and lysine 336. Aspartate 403, histidine 407, aspartate 444, histidine 445, and histidine 462 together coordinate Mn(2+).

This sequence belongs to the BPG-independent phosphoglycerate mutase family. In terms of assembly, monomer. The cofactor is Mn(2+).

It carries out the reaction (2R)-2-phosphoglycerate = (2R)-3-phosphoglycerate. The protein operates within carbohydrate degradation; glycolysis; pyruvate from D-glyceraldehyde 3-phosphate: step 3/5. With respect to regulation, could be inhibited during sporulation by acidification of the forespore, thus allowing accumulation of the spore's large depot of 3-phosphoglyceric acid. Its function is as follows. Essential for rapid growth and for sporulation. Catalyzes the interconversion of 2-phosphoglycerate (2-PGA) and 3-phosphoglycerate (3-PGA). The protein is 2,3-bisphosphoglycerate-independent phosphoglycerate mutase of Geobacillus stearothermophilus (Bacillus stearothermophilus).